Here is a 211-residue protein sequence, read N- to C-terminus: ATP phosphoribosyltransferase (211 aa).

The protein belongs to the ATP phosphoribosyltransferase family. Short subfamily. As to quaternary structure, heteromultimer composed of HisG and HisZ subunits.

The protein resides in the cytoplasm. The enzyme catalyses 1-(5-phospho-beta-D-ribosyl)-ATP + diphosphate = 5-phospho-alpha-D-ribose 1-diphosphate + ATP. It participates in amino-acid biosynthesis; L-histidine biosynthesis; L-histidine from 5-phospho-alpha-D-ribose 1-diphosphate: step 1/9. Its function is as follows. Catalyzes the condensation of ATP and 5-phosphoribose 1-diphosphate to form N'-(5'-phosphoribosyl)-ATP (PR-ATP). Has a crucial role in the pathway because the rate of histidine biosynthesis seems to be controlled primarily by regulation of HisG enzymatic activity. This chain is ATP phosphoribosyltransferase, found in Hahella chejuensis (strain KCTC 2396).